The sequence spans 364 residues: Palmitoyltransferase ZDHHC9 (364 aa).

Residues 1 to 35 lie on the Cytoplasmic side of the membrane; the sequence is MSVMVVRKKVTRKWEKLPGRNTFCCDGRVMMARQK. The helical transmembrane segment at 36–56 threads the bilayer; it reads GIFYLTLFLILGTCTLFFAFE. At 57–63 the chain is on the lumenal side; it reads CRYLAVQ. A helical membrane pass occupies residues 64–84; it reads QSPAIPVFAAMLFLFSMATLL. The Cytoplasmic segment spans residues 85-183; the sequence is RASFSDPGVI…NCVGKRNYRY (99 aa). The 51-residue stretch at 139–189 folds into the DHHC domain; the sequence is KYCYTCKIFRPPRASHCSICDNCVERFDHHCPWVGNCVGKRNYRYFYLFIL. Catalysis depends on cysteine 169, which acts as the S-palmitoyl cysteine intermediate. The helical transmembrane segment at 184-204 threads the bilayer; that stretch reads FYLFILSLSLLTIYVFAFNIV. Residues 205-228 lie on the Lumenal side of the membrane; sequence YVALKSLKIGFLETLKETPGTVLE. The helical transmembrane segment at 229–249 threads the bilayer; sequence VLICFFTLWSVVGLTGFHTFL. Residues 250 to 364 are Cytoplasmic-facing; it reads VALNQTTNED…PPQEAAEAEK (115 aa). A disordered region spans residues 303–364; the sequence is PLEESGSRPP…PPQEAAEAEK (62 aa). Residues 310 to 323 are compositionally biased toward polar residues; sequence RPPSTQETSSSLLP. Positions 346–356 are enriched in pro residues; the sequence is EMPPPEPPEPP.

The protein belongs to the DHHC palmitoyltransferase family. ERF2/ZDHHC9 subfamily. As to quaternary structure, interacts with GOLGA7.

The protein localises to the endoplasmic reticulum membrane. The protein resides in the golgi apparatus membrane. It carries out the reaction L-cysteinyl-[protein] + hexadecanoyl-CoA = S-hexadecanoyl-L-cysteinyl-[protein] + CoA. Its function is as follows. Palmitoyltransferase that catalyzes the addition of palmitate onto various protein substrates, such as ADRB2, GSDMD, HRAS, NRAS and CGAS. The ZDHHC9-GOLGA7 complex is a palmitoyltransferase specific for HRAS and NRAS. May have a palmitoyltransferase activity toward the beta-2 adrenergic receptor/ADRB2 and therefore regulate G protein-coupled receptor signaling. Acts as a regulator of innate immunity by catalyzing palmitoylation of CGAS, thereby promoting CGAS homodimerization and cyclic GMP-AMP synthase activity. Activates pyroptosis by catalyzing palmitoylation of gasdermin-D (GSDMD), thereby promoting membrane translocation and pore formation of GSDMD. This chain is Palmitoyltransferase ZDHHC9 (ZDHHC9), found in Pongo abelii (Sumatran orangutan).